Consider the following 523-residue polypeptide: Peptide chain release factor 3 (523 aa).

The 268-residue stretch at 8–275 (KKRRTFAIIS…TFLEYAPEPH (268 aa)) folds into the tr-type G domain. GTP contacts are provided by residues 17-24 (SHPDAGKT), 85-89 (DTPGH), and 139-142 (NKLD).

This sequence belongs to the TRAFAC class translation factor GTPase superfamily. Classic translation factor GTPase family. PrfC subfamily.

It is found in the cytoplasm. Functionally, increases the formation of ribosomal termination complexes and stimulates activities of RF-1 and RF-2. It binds guanine nucleotides and has strong preference for UGA stop codons. It may interact directly with the ribosome. The stimulation of RF-1 and RF-2 is significantly reduced by GTP and GDP, but not by GMP. This chain is Peptide chain release factor 3, found in Lactococcus lactis subsp. cremoris (strain SK11).